Reading from the N-terminus, the 218-residue chain is Large ribosomal subunit protein uL4 (218 aa).

Residues 46–102 (ARQGTHSTKTRGEVRGGGRKPFRQKGTGRARQGSIRAPHFTGGGISHGPKPRDYSQR) form a disordered region. Residues 62–73 (GGRKPFRQKGTG) are compositionally biased toward basic residues.

This sequence belongs to the universal ribosomal protein uL4 family. Part of the 50S ribosomal subunit.

Its function is as follows. One of the primary rRNA binding proteins, this protein initially binds near the 5'-end of the 23S rRNA. It is important during the early stages of 50S assembly. It makes multiple contacts with different domains of the 23S rRNA in the assembled 50S subunit and ribosome. In terms of biological role, forms part of the polypeptide exit tunnel. This is Large ribosomal subunit protein uL4 from Corynebacterium glutamicum (strain R).